The primary structure comprises 2581 residues: Highly reducing polyketide synthase sorA (2581 aa).

Residues 14 to 436 (SEPIAIIGMS…GSNAHIILED (423 aa)) form the Ketosynthase family 3 (KS3) domain. Catalysis depends on for beta-ketoacyl synthase activity residues C187, H322, and H359. A malonyl-CoA:ACP transacylase (MAT) domain region spans residues 574-868 (VFTGQGAQWN…VVEVGPHTAL (295 aa)). Residues 966 to 1103 (HDLLGSIVEG…GLVSVELGES (138 aa)) are N-terminal hotdog fold. Residues 966–1270 (HDLLGSIVEG…GFSYQSLGRS (305 aa)) are dehydratase (DH) domain. The PKS/mFAS DH domain maps to 966–1273 (HDLLGSIVEG…YQSLGRSTSL (308 aa)). The active-site Proton acceptor; for dehydratase activity is the H998. The interval 1119 to 1273 (TRRILPADLF…YQSLGRSTSL (155 aa)) is C-terminal hotdog fold. D1184 serves as the catalytic Proton donor; for dehydratase activity. The methyltransferase (CMet) domain stretch occupies residues 1461–1568 (LEVGAATGAI…SSLLKPGGTL (108 aa)). The tract at residues 1873–2184 (LKPDLLVFGD…AGDQIGKVVL (312 aa)) is enoyl reductase (ER)domain. The segment at 2207–2389 (VSYLIVGGSG…AVSIDLSVVN (183 aa)) is ketoreductase (KR) domain. Residues 2497-2574 (DAVRVVGTAI…QLAIDVVDRS (78 aa)) form the Carrier domain. An O-(pantetheine 4'-phosphoryl)serine modification is found at S2534.

It functions in the pathway secondary metabolite biosynthesis. Highly reducing polyketide synthase; part of the gene cluster that mediates the biosynthesis of sorbicillinoids, a diverse group of yellow secondary metabolites that restrict growth of competing pathogenic fungi but not of bacteria. Sorbicillinoids biosynthesis requires the action of two PKSs. SorA iteratively combines three acetyl units and the growing chain is modified by the ketoacyl reductase subunit, and optional by the enoyl reductase subunit in the second cycle. The polyketide is then handed over to the PKS SorB, which adds three more acetyl units, and two methyl groups. SorB releases an aldehyde, which undergoes spontaneous cyclization resulting in the formation of sorbicillin or 2',3'-dihydrosorbicillin. The monooxygenase sorC oxidizes sorbicillin and 2',3'-dihydrosorbicillin to 2',3'-dihydrosorbicillinol and sorbicillinol, respectively. The oxidoreductase sorD further converts sorbicillinol into oxosorbicillinol. Sorbicillinol is the building block for the other sorbicillinoids such as disorbicillinol, bisvertinolon, and dihydrobisvertinolone. The polypeptide is Highly reducing polyketide synthase sorA (Penicillium rubens (strain ATCC 28089 / DSM 1075 / NRRL 1951 / Wisconsin 54-1255) (Penicillium chrysogenum)).